A 138-amino-acid polypeptide reads, in one-letter code: Small ribosomal subunit protein uS12 (138 aa).

Residues Met-1 to Pro-22 are compositionally biased toward polar residues. Positions Met-1–Gly-45 are disordered. Asp-102 is subject to 3-methylthioaspartic acid.

It belongs to the universal ribosomal protein uS12 family. As to quaternary structure, part of the 30S ribosomal subunit. Contacts proteins S8 and S17. May interact with IF1 in the 30S initiation complex.

With S4 and S5 plays an important role in translational accuracy. In terms of biological role, interacts with and stabilizes bases of the 16S rRNA that are involved in tRNA selection in the A site and with the mRNA backbone. Located at the interface of the 30S and 50S subunits, it traverses the body of the 30S subunit contacting proteins on the other side and probably holding the rRNA structure together. The combined cluster of proteins S8, S12 and S17 appears to hold together the shoulder and platform of the 30S subunit. In Lacticaseibacillus paracasei (strain ATCC 334 / BCRC 17002 / CCUG 31169 / CIP 107868 / KCTC 3260 / NRRL B-441) (Lactobacillus paracasei), this protein is Small ribosomal subunit protein uS12.